The sequence spans 147 residues: UPF0306 protein KPN78578_35330 (147 aa).

It belongs to the UPF0306 family.

This Klebsiella pneumoniae subsp. pneumoniae (strain ATCC 700721 / MGH 78578) protein is UPF0306 protein KPN78578_35330.